The sequence spans 728 residues: Protein Hook homolog 1 (728 aa).

Residue methionine 1 is modified to N-acetylmethionine. The tract at residues 1–555 (MEDPQPLPQS…LKQKLEAHME (555 aa)) is sufficient for interaction with microtubules. Positions 12–128 (LPLCDSLIIW…RLLQLILGCA (117 aa)) constitute a Calponin-homology (CH) domain. Coiled coils occupy residues 168-443 (PASD…LNQA) and 477-658 (LRLQ…AKLR). Serine 235 carries the phosphoserine modification. The tract at residues 481–510 (QEGTENERIEQLQEQLEQKHRKMNELETEQ) is disordered. The sufficient for interaction with AKTIP and VPS18 stretch occupies residues 657–728 (LRDYEEKLIV…SVKVPAAASD (72 aa)). Phosphoserine occurs at positions 719 and 727.

Belongs to the hook family. In terms of assembly, self-associates. Component of the FTS/Hook/FHIP complex (FHF complex), composed of AKTIP/FTS, FHIP1B, and one or more members of the Hook family of proteins HOOK1, HOOK2, and HOOK3. Interacts directly with AKTIP/FTS, HOOK2 and HOOK3. Associates with several subunits of the homotypic vesicular sorting complex (the HOPS complex) including VPS16, VPS18, VPS39 and VPS41; these interactions may be indirect. Interacts with CCDC181. Interacts (via coiled-coil region) with RIMBP3 (via C-terminus). Interacts with LRGUK (via guanylate kinase-like domain). Interacts with microtubules. May interacts with CLN3. Interacts with AP4M1; the interaction is direct, mediates the interaction between FTS-Hook-FHIP (FHF) complex and AP-4 and the perinuclear distribution of AP-4. As to expression, mainly expressed in testis.

It is found in the cytoplasm. Its subcellular location is the cytoskeleton. Functionally, component of the FTS/Hook/FHIP complex (FHF complex). The FHF complex may function to promote vesicle trafficking and/or fusion via the homotypic vesicular protein sorting complex (the HOPS complex). FHF complex promotes the distribution of AP-4 complex to the perinuclear area of the cell. Required for spermatid differentiation. Probably involved in the positioning of the microtubules of the manchette and the flagellum in relation to the membrane skeleton. In Mus musculus (Mouse), this protein is Protein Hook homolog 1 (Hook1).